A 676-amino-acid polypeptide reads, in one-letter code: Zinc finger CCCH domain-containing protein 38 (676 aa).

5 disordered regions span residues 1 to 134 (MEMS…DHLF), 172 to 217 (SSDY…RSSN), 245 to 307 (RKQP…SWID), 487 to 506 (SVQP…NPNQ), and 533 to 594 (IQEV…DPKG). Basic and acidic residues predominate over residues 12–21 (SKWDSKEDTH). The segment covering 58–79 (RVSQNNDNSYFSEQDGTRQQFV) has biased composition (polar residues). Basic and acidic residues-rich tracts occupy residues 101-110 (ARRDAGSYDR), 124-134 (EFNKRGSDHLF), and 192-212 (SEFT…EGGF). The segment at 214–243 (RSSNIPCKFFAAGTGFCRNGKYCRFSHHVA) adopts a C3H1-type zinc-finger fold. Over residues 251-262 (NNNNFYRQDNNN) the composition is skewed to low complexity. The segment covering 269 to 278 (KWNDVERLDN) has biased composition (basic and acidic residues). Residues 538–562 (LDPKENGDKKTDEASKEEEGKKTGE) show a composition bias toward basic and acidic residues. Residues 563–583 (DTNDAENVVDEDEDGDDDGSD) show a composition bias toward acidic residues. The span at 584–594 (EENKKEKDPKG) shows a compositional bias: basic and acidic residues.

This Arabidopsis thaliana (Mouse-ear cress) protein is Zinc finger CCCH domain-containing protein 38.